A 288-amino-acid chain; its full sequence is UPF0276 protein VP3015 (288 aa).

This sequence belongs to the UPF0276 family.

This Vibrio parahaemolyticus serotype O3:K6 (strain RIMD 2210633) protein is UPF0276 protein VP3015.